A 138-amino-acid polypeptide reads, in one-letter code: Small ribosomal subunit protein uS11c (138 aa).

The interval 1–24 (MAKAIPRSGSRRSGRIGSRKSTRR) is disordered. Residues 9–24 (GSRRSGRIGSRKSTRR) are compositionally biased toward basic residues.

It belongs to the universal ribosomal protein uS11 family. As to quaternary structure, part of the 30S ribosomal subunit.

It localises to the plastid. The protein resides in the chloroplast. The polypeptide is Small ribosomal subunit protein uS11c (Panax ginseng (Korean ginseng)).